Consider the following 463-residue polypeptide: MVSPDDSPEIRDRPRPRRCLLPASVTVEPVIFLSMFALALQGPLATQYLWDRLSADIGFNGTRTVGCAMNGSKSAGPEQQEVETLTAHWSLYINLGGFLVGLFSVMLLGPWSDKVGRRPVLMLPCIGLALQAAVYLLVMYQELHVGYFLIGRFISGISGDFNMILAGCFAYIADVSDRQSRTFRVAVLEACLGIAGMVASIIGGHWRKAQGYINPFWLVFAVNLFTALYVYFCVEESVKDKKPARLFTHRHYQSFFRLFTVQGENNRRRKLFLYSLALLVVVTVHMGAKNLFVLYELSYPLCWDSDLIGYGSAAEHLTYLSSLAGLRLFQLCLADSWVAEMGFISNISGLVVISLASTTPIMFTGYGLRFFAMATTPVIRSKLSKMVEEGEQGALFSSVACVEGLSFLLATGLFNSLYPATLHFMKGFPFLLGALLLLIPAGIIGLIEVCEQKPMYSQFSEIS.

Residues 1 to 27 are Cytoplasmic-facing; the sequence is MVSPDDSPEIRDRPRPRRCLLPASVTV. Residues 28–46 form a helical membrane-spanning segment; that stretch reads EPVIFLSMFALALQGPLAT. Over 47–86 the chain is Extracellular; that stretch reads QYLWDRLSADIGFNGTRTVGCAMNGSKSAGPEQQEVETLT. 2 N-linked (GlcNAc...) asparagine glycosylation sites follow: N60 and N70. Residues C67 and C302 are joined by a disulfide bond. A helical membrane pass occupies residues 87-112; sequence AHWSLYINLGGFLVGLFSVMLLGPWS. Topologically, residues 113–116 are cytoplasmic; sequence DKVG. A helical membrane pass occupies residues 117 to 139; that stretch reads RRPVLMLPCIGLALQAAVYLLVM. At 140-144 the chain is on the extracellular side; it reads YQELH. The chain crosses the membrane as a helical span at residues 145-158; that stretch reads VGYFLIGRFISGIS. Topologically, residues 159 to 181 are cytoplasmic; the sequence is GDFNMILAGCFAYIADVSDRQSR. Positions 160 and 189 each coordinate H(+). Residues 182 to 207 traverse the membrane as a helical segment; it reads TFRVAVLEACLGIAGMVASIIGGHWR. Over 208 to 212 the chain is Extracellular; that stretch reads KAQGY. The helical transmembrane segment at 213–231 threads the bilayer; that stretch reads INPFWLVFAVNLFTALYVY. Over 232–270 the chain is Cytoplasmic; the sequence is FCVEESVKDKKPARLFTHRHYQSFFRLFTVQGENNRRRK. A helical membrane pass occupies residues 271–293; the sequence is LFLYSLALLVVVTVHMGAKNLFV. A H(+)-binding site is contributed by H285. At 294 to 306 the chain is on the extracellular side; it reads LYELSYPLCWDSD. The chain crosses the membrane as a helical span at residues 307–329; the sequence is LIGYGSAAEHLTYLSSLAGLRLF. The Cytoplasmic portion of the chain corresponds to 330 to 335; the sequence is QLCLAD. A helical transmembrane segment spans residues 336–355; sequence SWVAEMGFISNISGLVVISL. The Extracellular portion of the chain corresponds to 356–359; that stretch reads ASTT. Residues 360–380 form a helical membrane-spanning segment; that stretch reads PIMFTGYGLRFFAMATTPVIR. Residues 381–392 are Cytoplasmic-facing; the sequence is SKLSKMVEEGEQ. A helical transmembrane segment spans residues 393–418; the sequence is GALFSSVACVEGLSFLLATGLFNSLY. The Extracellular portion of the chain corresponds to 419–426; sequence PATLHFMK. Residues 427–445 traverse the membrane as a helical segment; it reads GFPFLLGALLLLIPAGIIG. The Cytoplasmic segment spans residues 446 to 463; the sequence is LIEVCEQKPMYSQFSEIS.

It belongs to the major facilitator superfamily. SLC46A family. In terms of assembly, monomer.

It localises to the cell membrane. The protein resides in the apical cell membrane. It is found in the basolateral cell membrane. The protein localises to the endosome membrane. Its subcellular location is the cytoplasm. It carries out the reaction folate(in) + H(+)(in) = folate(out) + H(+)(out). The catalysed reaction is (6S)-5-methyl-5,6,7,8-tetrahydrofolate(in) + H(+)(in) = (6S)-5-methyl-5,6,7,8-tetrahydrofolate(out) + H(+)(out). The enzyme catalyses methotrexate(in) + H(+)(in) = methotrexate(out) + H(+)(out). It catalyses the reaction pemetrexed(in) + H(+)(in) = pemetrexed(out) + H(+)(out). Functionally, proton-coupled folate symporter that mediates folate absorption using an H(+) gradient as a driving force. Involved in the intestinal absorption of folates at the brush-border membrane of the proximal jejunum, and the transport from blood to cerebrospinal fluid across the choroid plexus. Functions at acidic pH via alternate outward- and inward-open conformation states. Protonation of residues in the outward open state primes the protein for transport. Binding of folate promotes breaking of salt bridge network and subsequent closure of the extracellular gate, leading to the inward-open state and release of protons and folate. Also able to transport antifolate drugs, such as methotrexate and pemetrexed. Also acts as a lower-affinity, pH-independent heme carrier protein and constitutes the main importer of heme in the intestine. Imports heme in the retina and retinal pigment epithelium, in neurons of the hippocampus, in hepatocytes and in the renal epithelial cells. This chain is Proton-coupled folate transporter, found in Xenopus laevis (African clawed frog).